A 196-amino-acid chain; its full sequence is DnaA initiator-associating protein DiaA (196 aa).

In terms of domain architecture, SIS spans Leu34–Asp196.

It belongs to the SIS family. DiaA subfamily. In terms of assembly, homotetramer; dimer of dimers.

In terms of biological role, required for the timely initiation of chromosomal replication via direct interactions with the DnaA initiator protein. This is DnaA initiator-associating protein DiaA from Yersinia pseudotuberculosis serotype O:1b (strain IP 31758).